The primary structure comprises 915 residues: Protein O-mannosyl-transferase TMTC3 (915 aa).

Over 1–8 the chain is Cytoplasmic; it reads MANINLKE. Residues 9–29 traverse the membrane as a helical segment; sequence ITLIVGVVTACYWNSLFCGFV. At 30–93 the chain is on the extracellular side; that stretch reads FDDVSAILDN…LSELKPMSYH (64 aa). The helical transmembrane segment at 94–114 threads the bilayer; that stretch reads LLNMIFHAVVSVIFLKVCKLF. The Cytoplasmic segment spans residues 115–120; sequence LDNKSS. A run of 2 helical transmembrane segments spans residues 121–139 and 140–158; these read VIAS…AVTG and VVGR…AFLS. Residues 159 to 166 lie on the Cytoplasmic side of the membrane; it reads YTRSKGPD. Residues 167-187 traverse the membrane as a helical segment; sequence NSIIWTPIALTVFLVAVATLC. Residues 188–193 are Extracellular-facing; sequence KEQGIT. Residues 194–214 form a helical membrane-spanning segment; that stretch reads VVGICCVYEVFIAQGYTLPLL. The Cytoplasmic portion of the chain corresponds to 215 to 231; the sequence is CTTAGQFLRGKGSIPFS. The helical transmembrane segment at 232–252 threads the bilayer; that stretch reads MLQTLVKLIVLMFSTLLLVVI. Residues 253-317 are Extracellular-facing; that stretch reads RVQVIQSQLP…TIPLIESLLD (65 aa). The helical transmembrane segment at 318 to 338 threads the bilayer; the sequence is IRNLATFTFFCFLGMLGVFSI. Topologically, residues 339 to 353 are cytoplasmic; that stretch reads RYSGDSSKTVLMALC. Residues 354–374 form a helical membrane-spanning segment; the sequence is LMALPFIPASNLFFPVGFVVA. Over 375–376 the chain is Extracellular; sequence ER. A helical membrane pass occupies residues 377-397; it reads VLYVPSMGFCILVAHGWQKIS. Residues 398–404 lie on the Cytoplasmic side of the membrane; the sequence is TKSVFKK. The chain crosses the membrane as a helical span at residues 405-423; sequence LSWICLSMVILTHSLKTFH. Over 424 to 915 the chain is Extracellular; sequence RNWDWESEYT…EEIERILNGE (492 aa). 9 TPR repeats span residues 446–479, 480–513, 529–562, 563–596, 597–631, 669–702, 703–736, 738–771, and 772–805; these read AKLW…QPDD, IGAH…MPQI, NVYI…RPDF, KQAY…DRNN, ADLW…NPKH, ANGY…QADF, RSAL…YPDH, KGLI…DPSN, and VQGK…APHE. Asparagine 494 is a glycosylation site (N-linked (GlcNAc...) asparagine). Residue tyrosine 503 is modified to Phosphotyrosine. A glycan (N-linked (GlcNAc...) asparagine) is linked at asparagine 541. Positions 848–892 are disordered; that stretch reads KEIRGESRQTQIVKTSDNKSQSKSNKQLGKNGDEETPHKTTKDIK. N-linked (GlcNAc...) asparagine glycosylation is present at asparagine 865. A compositionally biased stretch (low complexity) spans 865-874; it reads NKSQSKSNKQ. Basic and acidic residues predominate over residues 878 to 892; that stretch reads NGDEETPHKTTKDIK.

The protein belongs to the TMTC family.

Its subcellular location is the membrane. The protein localises to the endoplasmic reticulum. The catalysed reaction is a di-trans,poly-cis-dolichyl beta-D-mannosyl phosphate + L-seryl-[protein] = 3-O-(alpha-D-mannosyl)-L-seryl-[protein] + a di-trans,poly-cis-dolichyl phosphate + H(+). The enzyme catalyses a di-trans,poly-cis-dolichyl beta-D-mannosyl phosphate + L-threonyl-[protein] = 3-O-(alpha-D-mannosyl)-L-threonyl-[protein] + a di-trans,poly-cis-dolichyl phosphate + H(+). The protein operates within protein modification; protein glycosylation. Its function is as follows. Transfers mannosyl residues to the hydroxyl group of serine or threonine residues. The 4 members of the TMTC family are O-mannosyl-transferases dedicated primarily to the cadherin superfamily, each member seems to have a distinct role in decorating the cadherin domains with O-linked mannose glycans at specific regions. Also acts as O-mannosyl-transferase on other proteins such as PDIA3. Involved in the positive regulation of proteasomal protein degradation in the endoplasmic reticulum (ER), and the control of ER stress response. The sequence is that of Protein O-mannosyl-transferase TMTC3 from Homo sapiens (Human).